We begin with the raw amino-acid sequence, 256 residues long: Flap endonuclease Xni (256 aa).

D105 is a binding site for Mg(2+). The 94-residue stretch at 163–256 (RSQLIDYLAL…QFRIKKPDSE (94 aa)) folds into the 5'-3' exonuclease domain. Positions 172, 173, 181, 183, and 186 each coordinate K(+). Positions 185–190 (GIGPKS) are interaction with DNA.

It belongs to the Xni family. Requires Mg(2+) as cofactor. The cofactor is K(+).

Functionally, has flap endonuclease activity. During DNA replication, flap endonucleases cleave the 5'-overhanging flap structure that is generated by displacement synthesis when DNA polymerase encounters the 5'-end of a downstream Okazaki fragment. The protein is Flap endonuclease Xni of Shewanella pealeana (strain ATCC 700345 / ANG-SQ1).